Reading from the N-terminus, the 177-residue chain is Putative pre-16S rRNA nuclease (177 aa).

It belongs to the YqgF nuclease family.

Its subcellular location is the cytoplasm. Its function is as follows. Could be a nuclease involved in processing of the 5'-end of pre-16S rRNA. The chain is Putative pre-16S rRNA nuclease from Psychrobacter sp. (strain PRwf-1).